Reading from the N-terminus, the 404-residue chain is Formate-dependent phosphoribosylglycinamide formyltransferase (404 aa).

Residues 25–26 (EL) and glutamate 85 contribute to the N(1)-(5-phospho-beta-D-ribosyl)glycinamide site. ATP contacts are provided by residues arginine 118, lysine 159, 164-169 (SSGKGQ), 199-202 (EGFI), and glutamate 207. An ATP-grasp domain is found at 123-318 (RLAAEELGLP…EFELHARAIL (196 aa)). Mg(2+) is bound by residues glutamate 277 and glutamate 289. N(1)-(5-phospho-beta-D-ribosyl)glycinamide-binding positions include aspartate 296, lysine 365, and 372–373 (RR).

This sequence belongs to the PurK/PurT family. In terms of assembly, homodimer.

It catalyses the reaction N(1)-(5-phospho-beta-D-ribosyl)glycinamide + formate + ATP = N(2)-formyl-N(1)-(5-phospho-beta-D-ribosyl)glycinamide + ADP + phosphate + H(+). Its pathway is purine metabolism; IMP biosynthesis via de novo pathway; N(2)-formyl-N(1)-(5-phospho-D-ribosyl)glycinamide from N(1)-(5-phospho-D-ribosyl)glycinamide (formate route): step 1/1. In terms of biological role, involved in the de novo purine biosynthesis. Catalyzes the transfer of formate to 5-phospho-ribosyl-glycinamide (GAR), producing 5-phospho-ribosyl-N-formylglycinamide (FGAR). Formate is provided by PurU via hydrolysis of 10-formyl-tetrahydrofolate. This is Formate-dependent phosphoribosylglycinamide formyltransferase from Burkholderia pseudomallei (strain 1106a).